A 387-amino-acid chain; its full sequence is Acetylornithine deacetylase (387 aa).

Zn(2+) is bound at residue His80. Asp82 is a catalytic residue. Asp112 contributes to the Zn(2+) binding site. Glu144 is a catalytic residue. 3 residues coordinate Zn(2+): Glu145, Glu169, and His355.

The protein belongs to the peptidase M20A family. ArgE subfamily. Homodimer. The cofactor is Zn(2+). Co(2+) is required as a cofactor. It depends on glutathione as a cofactor.

It is found in the cytoplasm. The catalysed reaction is N(2)-acetyl-L-ornithine + H2O = L-ornithine + acetate. Its pathway is amino-acid biosynthesis; L-arginine biosynthesis; L-ornithine from N(2)-acetyl-L-ornithine (linear): step 1/1. Functionally, catalyzes the hydrolysis of the amide bond of N(2)-acetylated L-amino acids. Cleaves the acetyl group from N-acetyl-L-ornithine to form L-ornithine, an intermediate in L-arginine biosynthesis pathway, and a branchpoint in the synthesis of polyamines. This chain is Acetylornithine deacetylase, found in Proteus mirabilis (strain HI4320).